The following is a 367-amino-acid chain: Apurinic-apyrimidinic endonuclease 1 (367 aa).

Zn(2+)-binding residues include histidine 83, histidine 123, glutamate 158, aspartate 192, histidine 195, histidine 229, aspartate 242, histidine 244, and glutamate 274. A disordered region spans residues 312–367; sequence DTLQKLGAKSRKEQLDKFEVKQKKRAGGTKRKKATAEPSDNDILSQMTKKRKTKKE. Over residues 321–332 the composition is skewed to basic and acidic residues; that stretch reads SRKEQLDKFEVK. A compositionally biased stretch (basic residues) spans 333–344; sequence QKKRAGGTKRKK. A Phosphoserine modification is found at serine 356.

It belongs to the AP endonuclease 2 family. As to quaternary structure, monomer. Zn(2+) serves as cofactor.

It is found in the nucleus. Its function is as follows. DNA repair enzyme that cleaves apurinic/apyrimidinic (AP) sites and removes 3'-blocking groups present at single strand breaks of damaged DNA. APN1 accounts for &gt; 97% of both apurinic/apyrimidinic (AP) endonuclease and DNA 3'-repair diesterase activities. The polypeptide is Apurinic-apyrimidinic endonuclease 1 (APN1) (Saccharomyces cerevisiae (strain ATCC 204508 / S288c) (Baker's yeast)).